Here is a 161-residue protein sequence, read N- to C-terminus: 6,7-dimethyl-8-ribityllumazine synthase (161 aa).

Residues F23, 61-63 (SFE), and 85-87 (AVI) contribute to the 5-amino-6-(D-ribitylamino)uracil site. Residue 90 to 91 (DT) coordinates (2S)-2-hydroxy-3-oxobutyl phosphate. H93 (proton donor) is an active-site residue. A 5-amino-6-(D-ribitylamino)uracil-binding site is contributed by F118. (2S)-2-hydroxy-3-oxobutyl phosphate is bound at residue R132.

This sequence belongs to the DMRL synthase family.

It carries out the reaction (2S)-2-hydroxy-3-oxobutyl phosphate + 5-amino-6-(D-ribitylamino)uracil = 6,7-dimethyl-8-(1-D-ribityl)lumazine + phosphate + 2 H2O + H(+). It functions in the pathway cofactor biosynthesis; riboflavin biosynthesis; riboflavin from 2-hydroxy-3-oxobutyl phosphate and 5-amino-6-(D-ribitylamino)uracil: step 1/2. Its function is as follows. Catalyzes the formation of 6,7-dimethyl-8-ribityllumazine by condensation of 5-amino-6-(D-ribitylamino)uracil with 3,4-dihydroxy-2-butanone 4-phosphate. This is the penultimate step in the biosynthesis of riboflavin. The protein is 6,7-dimethyl-8-ribityllumazine synthase of Synechococcus sp. (strain WH7803).